The sequence spans 242 residues: MSKRRLAPLTFLRRLLFRTLVALVVFWGGGIALFSVVPVPFSAVMAERQISAWLSGEFGYVAHSDWVSMEDISPWMGLAVMAAEDQKFPEHWGFDVLAIEKALAHNERNESRIRGASTLSQQTVKNLFLWDGRSWVRKGLEAGLTLGIETVWSKKRILTVYLNIAEFGDGIFGVEAAARRYFNKPASRLNMTEAALLAAVLPNPLRYKADAPSGYVRSRQSWILRQMRQLGGESFMTRNQLY.

The chain crosses the membrane as a helical span at residues 21–41 (VALVVFWGGGIALFSVVPVPF).

It belongs to the glycosyltransferase 51 family.

Its subcellular location is the cell inner membrane. The enzyme catalyses [GlcNAc-(1-&gt;4)-Mur2Ac(oyl-L-Ala-gamma-D-Glu-L-Lys-D-Ala-D-Ala)](n)-di-trans,octa-cis-undecaprenyl diphosphate + beta-D-GlcNAc-(1-&gt;4)-Mur2Ac(oyl-L-Ala-gamma-D-Glu-L-Lys-D-Ala-D-Ala)-di-trans,octa-cis-undecaprenyl diphosphate = [GlcNAc-(1-&gt;4)-Mur2Ac(oyl-L-Ala-gamma-D-Glu-L-Lys-D-Ala-D-Ala)](n+1)-di-trans,octa-cis-undecaprenyl diphosphate + di-trans,octa-cis-undecaprenyl diphosphate + H(+). It participates in cell wall biogenesis; peptidoglycan biosynthesis. Its function is as follows. Peptidoglycan polymerase that catalyzes glycan chain elongation from lipid-linked precursors. The polypeptide is Biosynthetic peptidoglycan transglycosylase (Salmonella arizonae (strain ATCC BAA-731 / CDC346-86 / RSK2980)).